Here is a 1338-residue protein sequence, read N- to C-terminus: ABC-type transporter kk1G (1338 aa).

Residues 1–21 are disordered; sequence MSAIELPPLRSRSEEAARAEH. Residues 11–21 are compositionally biased toward basic and acidic residues; sequence SRSEEAARAEH. Helical transmembrane passes span 75-95, 130-150, 203-223, 230-250, 312-332, and 340-360; these read YFLI…MPLM, LYIF…MLAI, HFAT…VALV, LIAS…FPPF, TMSP…WFGI, and ISSV…VMNI. The 293-residue stretch at 80 to 372 folds into the ABC transmembrane type-1 1 domain; it reads LCCFTSIGAG…VASPIISIAK (293 aa). Positions 405–706 constitute an ABC transporter 1 domain; that stretch reads ITFINVAFSY…GDGVYYGLVH (302 aa). 440-447 contacts ATP; that stretch reads GPSGSGKS. 2 disordered regions span residues 473–518 and 715–747; these read EIPS…TCTG and EDDD…HASR. 6 helical membrane passes run 777-797, 816-836, 895-917, 919-941, 1003-1023, and 1037-1057; these read VCCI…YIFA, FWAG…YLLG, MSMA…VYGW, LSLV…RTRL, IIFA…FWYG, and FFIV…WFSF. One can recognise an ABC transmembrane type-1 2 domain in the interval 777-1063; the sequence is VCCIGILGAG…WFSFTPSMAQ (287 aa). The ABC transporter 2 domain occupies 1096 to 1333; that stretch reads IEFQHVSFKY…KGVYWQMCQA (238 aa). ATP is bound at residue 1130–1137; sequence GSSGCGKS.

It belongs to the ABC transporter superfamily. ABCB family. Multidrug resistance exporter (TC 3.A.1.201) subfamily.

The protein localises to the cell membrane. It participates in secondary metabolite biosynthesis. Its function is as follows. ABC transporter; part of the gene cluster that mediates the biosynthesis of KK-1, a novel cyclic depsipeptide with 10 residues which is a promising active compound with high activity against many plant pathogens, especially Botrytis cinerea. Is probably directly involved in the secretion of KK-1 and thus confers self-tolerance against KK-1. This Curvularia clavata protein is ABC-type transporter kk1G.